A 213-amino-acid polypeptide reads, in one-letter code: Adenylate kinase (213 aa).

Residue 10-15 (GSGKGT) participates in ATP binding. The interval 30–59 (SVGDLLRNIISSSSELGKKIKGTVESGNLI) is NMP. AMP-binding positions include arginine 36, 57 to 59 (NLI), 83 to 86 (GFPR), and glutamine 90. Positions 125 to 160 (NRLACLDCKNIYSVSSFKSTTCAKCKSTRLEKRIDD) are LID. An ATP-binding site is contributed by arginine 126. Cysteine 129 and cysteine 132 together coordinate Zn(2+). 135-136 (IY) contacts ATP. Zn(2+) contacts are provided by cysteine 146 and cysteine 149. AMP-binding residues include arginine 157 and arginine 169. Residue leucine 195 coordinates ATP.

The protein belongs to the adenylate kinase family. As to quaternary structure, monomer.

The protein localises to the cytoplasm. The catalysed reaction is AMP + ATP = 2 ADP. The protein operates within purine metabolism; AMP biosynthesis via salvage pathway; AMP from ADP: step 1/1. Catalyzes the reversible transfer of the terminal phosphate group between ATP and AMP. Plays an important role in cellular energy homeostasis and in adenine nucleotide metabolism. The polypeptide is Adenylate kinase (Wolbachia pipientis wMel).